The following is a 42-amino-acid chain: Bacteriocin bavaricin-MN (42 aa).

Cysteine 10 and cysteine 15 are oxidised to a cystine.

The protein belongs to the bacteriocin class IIA/YGNGV family.

The protein localises to the secreted. Its function is as follows. Has antimicrobial activity. The sequence is that of Bacteriocin bavaricin-MN from Latilactobacillus sakei (Lactobacillus sakei).